The primary structure comprises 858 residues: DNA mismatch repair protein MutS (858 aa).

637–644 (GPNMAGKS) is a binding site for ATP.

Belongs to the DNA mismatch repair MutS family.

Functionally, this protein is involved in the repair of mismatches in DNA. It is possible that it carries out the mismatch recognition step. This protein has a weak ATPase activity. In Protochlamydia amoebophila (strain UWE25), this protein is DNA mismatch repair protein MutS.